A 339-amino-acid polypeptide reads, in one-letter code: Arylacetonitrilase (339 aa).

Residues Ile5–Leu290 form the CN hydrolase domain. Catalysis depends on Glu45, which acts as the Proton acceptor. Residue Lys126 is part of the active site. Cys167 acts as the Nucleophile in catalysis.

It belongs to the carbon-nitrogen hydrolase superfamily. Nitrilase family.

The catalysed reaction is a nitrile + 2 H2O = a carboxylate + NH4(+). It carries out the reaction 4-chlorophenylacetonitrile + 2 H2O = 4-chlorophenylacetate + NH4(+). In terms of biological role, nitrilase that hydrolyzes preferentially phenylacetonitrile, (R,S)-mandelonitrile, and 3-indolylacetonitrile. This is Arylacetonitrilase from Fusarium vanettenii (strain ATCC MYA-4622 / CBS 123669 / FGSC 9596 / NRRL 45880 / 77-13-4) (Fusarium solani subsp. pisi).